Here is a 283-residue protein sequence, read N- to C-terminus: Bifunctional protein FolD (283 aa).

166-168 (GAS) serves as a coordination point for NADP(+).

The protein belongs to the tetrahydrofolate dehydrogenase/cyclohydrolase family. In terms of assembly, homodimer.

The catalysed reaction is (6R)-5,10-methylene-5,6,7,8-tetrahydrofolate + NADP(+) = (6R)-5,10-methenyltetrahydrofolate + NADPH. It catalyses the reaction (6R)-5,10-methenyltetrahydrofolate + H2O = (6R)-10-formyltetrahydrofolate + H(+). It functions in the pathway one-carbon metabolism; tetrahydrofolate interconversion. Functionally, catalyzes the oxidation of 5,10-methylenetetrahydrofolate to 5,10-methenyltetrahydrofolate and then the hydrolysis of 5,10-methenyltetrahydrofolate to 10-formyltetrahydrofolate. The sequence is that of Bifunctional protein FolD from Coxiella burnetii (strain CbuK_Q154) (Coxiella burnetii (strain Q154)).